Reading from the N-terminus, the 115-residue chain is Large ribosomal subunit protein bL19 (115 aa).

The protein belongs to the bacterial ribosomal protein bL19 family.

Functionally, this protein is located at the 30S-50S ribosomal subunit interface and may play a role in the structure and function of the aminoacyl-tRNA binding site. This is Large ribosomal subunit protein bL19 from Desulforudis audaxviator (strain MP104C).